The following is a 507-amino-acid chain: Maturase K (507 aa).

This sequence belongs to the intron maturase 2 family. MatK subfamily.

The protein resides in the plastid. The protein localises to the chloroplast. In terms of biological role, usually encoded in the trnK tRNA gene intron. Probably assists in splicing its own and other chloroplast group II introns. This Asimina triloba (Pawpaw) protein is Maturase K.